Here is a 180-residue protein sequence, read N- to C-terminus: Glycodelin (180 aa).

The signal sequence occupies residues M1–A18. N-linked (GlcNAc...) (complex) asparagine glycosylation is found at N46 and N81. Intrachain disulfides connect C84/C178 and C124/C137.

This sequence belongs to the calycin superfamily. Lipocalin family. As to quaternary structure, homodimer. Four distinct glycoforms A, C, F and S arise from different N-linked oligosaccharide chains at amino acid residues Asn-46 and Asn-81. Glycodelin-A and -F are taken up by the cumulus cells in which partial deglycosylation takes place to produce glycodelin-C. This protein is, the main protein synthesized and secreted in the endometrium from mid-luteal phase of the menstrual cycle and during the first semester of pregnancy. Glycodelin-A is expressed in amniotic fluid, endometrium/decidua and maternal serum (at protein level). Glycodelin-F is expressed in follicular fluid, luteinized granulosa cells and the oviduct (at protein level). Glycodelin-S is expressed in seminal plasma and seminal vesicles (at protein level). Glycodelin-C is detected in cumulus cells (at protein level), but cumulus cells do not synthesize Glycodelin-C but take up and convert glycodelin-A and -F vis glycan remodeling.

It localises to the secreted. In terms of biological role, glycoprotein that regulates critical steps during fertilization and also has immunomonomodulatory effects. Four glycoforms, namely glycodelin-S, -A, -F and -C have been identified in reproductive tissues that differ in glycosylation and biological activity. Glycodelin-A has contraceptive and immunosuppressive activities. Glycodelin-C stimulates binding of spermatozoa to the zona pellucida. Glycodelin-F inhibits spermatozoa-zona pellucida binding and significantly suppresses progesterone-induced acrosome reaction of spermatozoa. Glycodelin-S in seminal plasma maintains the uncapacitated state of human spermatozoa. This Homo sapiens (Human) protein is Glycodelin (PAEP).